The sequence spans 55 residues: ATP synthase protein 8 (55 aa).

The chain crosses the membrane as a helical span at residues 7–24; that stretch reads NPWLFIMLMSWLTFSLII. Residues 35-55 form a disordered region; the sequence is NPPSNKTPTTTKTSPWTWPWT. Over residues 37–55 the composition is skewed to low complexity; that stretch reads PSNKTPTTTKTSPWTWPWT.

Belongs to the ATPase protein 8 family. As to quaternary structure, F-type ATPases have 2 components, CF(1) - the catalytic core - and CF(0) - the membrane proton channel.

Its subcellular location is the mitochondrion membrane. Functionally, mitochondrial membrane ATP synthase (F(1)F(0) ATP synthase or Complex V) produces ATP from ADP in the presence of a proton gradient across the membrane which is generated by electron transport complexes of the respiratory chain. F-type ATPases consist of two structural domains, F(1) - containing the extramembraneous catalytic core and F(0) - containing the membrane proton channel, linked together by a central stalk and a peripheral stalk. During catalysis, ATP synthesis in the catalytic domain of F(1) is coupled via a rotary mechanism of the central stalk subunits to proton translocation. Part of the complex F(0) domain. Minor subunit located with subunit a in the membrane. The protein is ATP synthase protein 8 (MT-ATP8) of Corythaeola cristata (Great blue turaco).